Here is a 120-residue protein sequence, read N- to C-terminus: Small ribosomal subunit protein bS6 (120 aa).

A compositionally biased stretch (polar residues) spans 97–112 (SNEPSPILKNQSTENT). Positions 97-120 (SNEPSPILKNQSTENTPVIDVTAN) are disordered.

Belongs to the bacterial ribosomal protein bS6 family.

Binds together with bS18 to 16S ribosomal RNA. This chain is Small ribosomal subunit protein bS6, found in Rickettsia bellii (strain RML369-C).